The chain runs to 224 residues: 7-cyano-7-deazaguanine synthase (224 aa).

8–18 (LSGGMDSAAVI) contributes to the ATP binding site. Residues C186, C196, C199, and C202 each coordinate Zn(2+).

It belongs to the QueC family. Zn(2+) serves as cofactor.

It catalyses the reaction 7-carboxy-7-deazaguanine + NH4(+) + ATP = 7-cyano-7-deazaguanine + ADP + phosphate + H2O + H(+). It functions in the pathway purine metabolism; 7-cyano-7-deazaguanine biosynthesis. Its function is as follows. Catalyzes the ATP-dependent conversion of 7-carboxy-7-deazaguanine (CDG) to 7-cyano-7-deazaguanine (preQ(0)). This chain is 7-cyano-7-deazaguanine synthase, found in Xanthomonas axonopodis pv. citri (strain 306).